Reading from the N-terminus, the 375-residue chain is Platelet-derived growth factor receptor-like protein (375 aa).

An N-terminal signal peptide occupies residues Met-1–Gly-17. The disordered stretch occupies residues Val-19 to Lys-63. The span at Pro-40–Pro-50 shows a compositional bias: basic residues. Positions Pro-62–Arg-159 constitute an Ig-like C2-type 1 domain. Cys-96 and Cys-143 are disulfide-bonded. Asn-219 carries N-linked (GlcNAc...) asparagine glycosylation. The Ig-like C2-type 2 domain maps to Pro-272–Ser-375. The cysteines at positions 293 and 357 are disulfide-linked.

Forms a complex composed of PDGFRL, TNK2 and GRB2.

The protein localises to the secreted. This chain is Platelet-derived growth factor receptor-like protein (Pdgfrl), found in Rattus norvegicus (Rat).